The primary structure comprises 236 residues: Eukaryotic translation initiation factor 3 subunit J (236 aa).

The tract at residues 1–88 is disordered; sequence MADDWESAAD…EAEAQRVASL (88 aa). Residues 28 to 46 are compositionally biased toward acidic residues; that stretch reads GEDEDEDIKDSWEDEEEKK. 2 stretches are compositionally biased toward basic and acidic residues: residues 47-58 and 68-77; these read DEEKPTKTEAPA and AKLEQQARLE.

The protein belongs to the eIF-3 subunit J family. As to quaternary structure, component of the eukaryotic translation initiation factor 3 (eIF-3) complex. The eIF-3 complex interacts with pix.

The protein localises to the cytoplasm. In terms of biological role, component of the eukaryotic translation initiation factor 3 (eIF-3) complex, which is involved in protein synthesis of a specialized repertoire of mRNAs and, together with other initiation factors, stimulates binding of mRNA and methionyl-tRNAi to the 40S ribosome. The eIF-3 complex specifically targets and initiates translation of a subset of mRNAs involved in cell proliferation. The polypeptide is Eukaryotic translation initiation factor 3 subunit J (Drosophila erecta (Fruit fly)).